The chain runs to 178 residues: 3-hydroxyacyl-[acyl-carrier-protein] dehydratase FabZ (178 aa).

The active site involves His54.

It belongs to the thioester dehydratase family. FabZ subfamily.

The protein resides in the cytoplasm. It catalyses the reaction a (3R)-hydroxyacyl-[ACP] = a (2E)-enoyl-[ACP] + H2O. In terms of biological role, involved in unsaturated fatty acids biosynthesis. Catalyzes the dehydration of short chain beta-hydroxyacyl-ACPs and long chain saturated and unsaturated beta-hydroxyacyl-ACPs. This chain is 3-hydroxyacyl-[acyl-carrier-protein] dehydratase FabZ, found in Yersinia enterocolitica.